A 386-amino-acid polypeptide reads, in one-letter code: Signal transduction histidine-protein kinase/phosphatase DegS (386 aa).

One can recognise a Histidine kinase domain in the interval 188–384; the sequence is KLSREIHDGP…TIIISIPITT (197 aa). His-194 bears the Phosphohistidine; by autocatalysis mark.

Post-translationally, autophosphorylated.

It is found in the cytoplasm. It catalyses the reaction ATP + protein L-histidine = ADP + protein N-phospho-L-histidine.. Its function is as follows. Member of the two-component regulatory system DegS/DegU, which plays an important role in the transition growth phase. Acts as both a protein kinase that undergoes autophosphorylation and subsequently transfers the phosphate to DegU, and a protein phosphatase that dephosphorylates phospho-DegU. This Brevibacillus brevis (Bacillus brevis) protein is Signal transduction histidine-protein kinase/phosphatase DegS (degS).